Reading from the N-terminus, the 118-residue chain is Large ribosomal subunit protein bL20 (118 aa).

It belongs to the bacterial ribosomal protein bL20 family.

Functionally, binds directly to 23S ribosomal RNA and is necessary for the in vitro assembly process of the 50S ribosomal subunit. It is not involved in the protein synthesizing functions of that subunit. In Trichodesmium erythraeum (strain IMS101), this protein is Large ribosomal subunit protein bL20.